We begin with the raw amino-acid sequence, 136 residues long: ATP synthase epsilon chain (136 aa).

The disordered stretch occupies residues 100–120; it reads QGALEEANRGEDKPNQLKASN. Basic and acidic residues predominate over residues 105 to 114; sequence EANRGEDKPN.

Belongs to the ATPase epsilon chain family. In terms of assembly, F-type ATPases have 2 components, CF(1) - the catalytic core - and CF(0) - the membrane proton channel. CF(1) has five subunits: alpha(3), beta(3), gamma(1), delta(1), epsilon(1). CF(0) has three main subunits: a, b and c.

The protein localises to the cellular thylakoid membrane. Its function is as follows. Produces ATP from ADP in the presence of a proton gradient across the membrane. The protein is ATP synthase epsilon chain (atpC) of Synechocystis sp. (strain ATCC 27184 / PCC 6803 / Kazusa).